The primary structure comprises 185 residues: Protein PBP4 (185 aa).

Composition is skewed to low complexity over residues 1-24 (MTTTSTTSVDGRTSSTLKATLSAS) and 46-62 (AQAAAKALPRQQQQQQQ). Disordered regions lie at residues 1–116 (MTTT…YNRE) and 147–168 (ETASGRVSTATDWGTVSSSKNK). Polar residues-rich tracts occupy residues 73–83 (PANTKTKTIAS), 91–102 (KGSSTANGSSTN), and 147–166 (ETASGRVSTATDWGTVSSSK).

Interacts with IGO1, LSM12 and PBP1.

It localises to the cytoplasm. It is found in the nucleus. The protein is Protein PBP4 (PBP4) of Saccharomyces cerevisiae (strain ATCC 204508 / S288c) (Baker's yeast).